The following is a 160-amino-acid chain: ATP synthase subunit b (160 aa).

The helical transmembrane segment at 15 to 35 threads the bilayer; sequence LAIVIGVLFWFLRGFLGGILE.

It belongs to the ATPase B chain family. As to quaternary structure, F-type ATPases have 2 components, F(1) - the catalytic core - and F(0) - the membrane proton channel. F(1) has five subunits: alpha(3), beta(3), gamma(1), delta(1), epsilon(1). F(0) has four main subunits: a(1), b(1), b'(1) and c(10-14). The alpha and beta chains form an alternating ring which encloses part of the gamma chain. F(1) is attached to F(0) by a central stalk formed by the gamma and epsilon chains, while a peripheral stalk is formed by the delta, b and b' chains.

Its subcellular location is the cellular thylakoid membrane. Its function is as follows. F(1)F(0) ATP synthase produces ATP from ADP in the presence of a proton or sodium gradient. F-type ATPases consist of two structural domains, F(1) containing the extramembraneous catalytic core and F(0) containing the membrane proton channel, linked together by a central stalk and a peripheral stalk. During catalysis, ATP synthesis in the catalytic domain of F(1) is coupled via a rotary mechanism of the central stalk subunits to proton translocation. In terms of biological role, component of the F(0) channel, it forms part of the peripheral stalk, linking F(1) to F(0). The sequence is that of ATP synthase subunit b from Synechococcus sp. (strain CC9902).